The following is a 149-amino-acid chain: Gonadotropin subunit beta-2 (149 aa).

Residues 1–24 (MARIPECTILLLLCMCVLAVPAQC) form the signal peptide. 6 cysteine pairs are disulfide-bonded: cysteine 30–cysteine 78, cysteine 44–cysteine 93, cysteine 47–cysteine 131, cysteine 55–cysteine 109, cysteine 59–cysteine 111, and cysteine 114–cysteine 121. Residue asparagine 34 is glycosylated (N-linked (GlcNAc...) asparagine).

This sequence belongs to the glycoprotein hormones subunit beta family. As to quaternary structure, heterodimer of an alpha and a beta chain.

The protein resides in the secreted. In terms of biological role, involved in gametogenesis and steroidogenesis. This Clupea pallasii (Pacific herring) protein is Gonadotropin subunit beta-2 (cgbb).